The primary structure comprises 108 residues: Glutaredoxin-1 (108 aa).

Positions 3 to 106 constitute a Glutaredoxin domain; sequence EEFVQQRLAN…DILSSIGVLR (104 aa). C23 and C26 are joined by a disulfide.

This sequence belongs to the glutaredoxin family.

It localises to the virion. Has thioltransferase and dehydroascorbate reductase activities. The sequence is that of Glutaredoxin-1 (OPG075) from Cowpox virus (strain GRI-90 / Grishak) (CPV).